The following is an 829-amino-acid chain: ATP-dependent RNA helicase drs1 (829 aa).

Disordered stretches follow at residues 1 to 96 and 145 to 295; these read MAPS…MDTE and RRER…MSSF. Positions 20–32 are enriched in acidic residues; sequence DNEEDIPLEEEQE. Basic residues predominate over residues 48–59; sequence KQKKKNNKKSKK. Positions 63-78 are enriched in acidic residues; the sequence is TEDDDDEAETKEDDAA. Over residues 150–163 the composition is skewed to basic and acidic residues; the sequence is AAKEGKTTATKEEE. Composition is skewed to acidic residues over residues 164-190, 218-228, 235-246, and 258-271; these read DKME…DGVL, DGEDEDSEGED, DEDEGDASDDDS, and QSSD…EEEE. A compositionally biased stretch (basic and acidic residues) spans 272–291; that stretch reads AKMKEFFAPEEENQPKKKGE. Residues 293–321 carry the Q motif motif; it reads SSFQEMSLSRPILRGLTSVGFTKPTPIQA. The Helicase ATP-binding domain occupies 324–498; that stretch reads IPISLMGKDV…RAGLNKPVRI (175 aa). An ATP-binding site is contributed by 337-344; it reads AVTGSGKT. A DEAD box motif is present at residues 446 to 449; it reads DEAD. One can recognise a Helicase C-terminal domain in the interval 528-707; sequence YLLHICKTIY…EKQLQNMEMQ (180 aa). The interval 728 to 829 is disordered; it reads TWFETQEDKK…KGGKGKGRRK (102 aa). A compositionally biased stretch (basic and acidic residues) spans 749–791; it reads GVRDKLKSKNEGKLSNKDRKKLDTMQERKQERTYKKGSAERAG. A compositionally biased stretch (basic residues) spans 800–815; sequence KVVKKVGRSAGPKKKG.

It belongs to the DEAD box helicase family. DDX27/DRS1 subfamily. As to quaternary structure, associates with pre-ribosomal particles.

It localises to the nucleus. Its subcellular location is the nucleolus. The catalysed reaction is ATP + H2O = ADP + phosphate + H(+). In terms of biological role, ATP-binding RNA helicase involved in ribosome assembly. The protein is ATP-dependent RNA helicase drs1 (drh-11) of Neurospora crassa (strain ATCC 24698 / 74-OR23-1A / CBS 708.71 / DSM 1257 / FGSC 987).